Reading from the N-terminus, the 330-residue chain is MKIMILGIDIGGANTKITEIEGDNYKIHHIYFPMWKKKDELEDLLKNYNDNVDYVALVMTAELADCYKTKKEGVEDIIDKVEKAFNCPVYVFDVNGNFLTSEEAKKNYLDVSASNWNATAKFVAEFIKDSCILVDMGSTTTDIIPIKDKEVLAEKTDLDRLMNNQLVYVGTLRTPVSFLANKIEFRGKLTNLSSEYFAITADISLILNKITEEDYTCDTPDGAGKDFESCLTRLVRVLCADREMVKDDELIDFANKLYNKLLELIRENVDTIAKRYNLNDVVITGLGEEILKDALDEYNIISIKETYGKDVSLATPSFAVAKLLQKQLDK.

Belongs to the MfnF family.

It carries out the reaction gamma-L-glutamyltyramine + [5-(aminomethyl)furan-3-yl]methyl diphosphate = (4-{4-[2-(gamma-L-glutamylamino)ethyl]phenoxymethyl}furan-2-yl)methanamine + diphosphate. Its pathway is cofactor biosynthesis; methanofuran biosynthesis. Catalyzes the condensation between 5-(aminomethyl)-3-furanmethanol diphosphate (F1-PP) and gamma-glutamyltyramine to produce APMF-Glu. This chain is (4-{4-[2-(gamma-L-glutamylamino)ethyl]phenoxymethyl}furan-2-yl)methanamine synthase, found in Methanocaldococcus jannaschii (strain ATCC 43067 / DSM 2661 / JAL-1 / JCM 10045 / NBRC 100440) (Methanococcus jannaschii).